We begin with the raw amino-acid sequence, 140 residues long: uncharacterized protein (140 aa).

It to B.subtilis YrhD.

This is an uncharacterized protein from Archaeoglobus fulgidus (strain ATCC 49558 / DSM 4304 / JCM 9628 / NBRC 100126 / VC-16).